Consider the following 615-residue polypeptide: Chaperone protein HscA homolog (615 aa).

This sequence belongs to the heat shock protein 70 family.

Its function is as follows. Chaperone involved in the maturation of iron-sulfur cluster-containing proteins. Has a low intrinsic ATPase activity which is markedly stimulated by HscB. The polypeptide is Chaperone protein HscA homolog (Aeromonas salmonicida (strain A449)).